Consider the following 577-residue polypeptide: Serine/threonine-protein kinase AGC1-5 (577 aa).

Residues 1-12 (MDLASKKNTANV) show a composition bias toward polar residues. The disordered stretch occupies residues 1 to 151 (MDLASKKNTA…DYAYGDNLVG (151 aa)). Basic and acidic residues predominate over residues 44 to 55 (PHFDPKKMDPLV). 2 stretches are compositionally biased toward polar residues: residues 69 to 87 (TRGT…SSDG) and 110 to 120 (LTTSETYSPSA). A Protein kinase domain is found at 185–509 (FRLLKRLGYG…ATEIKQHPFF (325 aa)). Residues 191–199 (LGYGDIGSV) and Lys214 contribute to the ATP site. Asp310 serves as the catalytic Proton acceptor. One can recognise an AGC-kinase C-terminal domain in the interval 510–577 (EGVNWALVRS…DTAYIDFEYF (68 aa)).

It belongs to the protein kinase superfamily. AGC Ser/Thr protein kinase family. In terms of assembly, interacts with PDPK1/PDK1. Autophosphorylated and phosphorylated by PDPK1/PDK1. In terms of tissue distribution, specifically expressed in pollen grains.

It catalyses the reaction L-seryl-[protein] + ATP = O-phospho-L-seryl-[protein] + ADP + H(+). The enzyme catalyses L-threonyl-[protein] + ATP = O-phospho-L-threonyl-[protein] + ADP + H(+). Activated by PDPK1/PDK1. Its function is as follows. Functions redudantly with AGC1-7 as signaling component in the pollen tube. Required for polarized growth of pollen tubes. In Arabidopsis thaliana (Mouse-ear cress), this protein is Serine/threonine-protein kinase AGC1-5.